Here is a 255-residue protein sequence, read N- to C-terminus: Ribosomal RNA small subunit methyltransferase A (255 aa).

S-adenosyl-L-methionine is bound by residues Asn11, Leu13, Gly38, Glu59, Asp83, and Asn101.

It belongs to the class I-like SAM-binding methyltransferase superfamily. rRNA adenine N(6)-methyltransferase family. RsmA subfamily.

It is found in the cytoplasm. The enzyme catalyses adenosine(1518)/adenosine(1519) in 16S rRNA + 4 S-adenosyl-L-methionine = N(6)-dimethyladenosine(1518)/N(6)-dimethyladenosine(1519) in 16S rRNA + 4 S-adenosyl-L-homocysteine + 4 H(+). In terms of biological role, specifically dimethylates two adjacent adenosines (A1518 and A1519) in the loop of a conserved hairpin near the 3'-end of 16S rRNA in the 30S particle. May play a critical role in biogenesis of 30S subunits. This chain is Ribosomal RNA small subunit methyltransferase A, found in Thiobacillus denitrificans (strain ATCC 25259 / T1).